The primary structure comprises 141 residues: Putative nickel-responsive regulator (141 aa).

4 residues coordinate Ni(2+): His-80, His-91, His-93, and Cys-99.

The protein belongs to the transcriptional regulatory CopG/NikR family. Ni(2+) serves as cofactor.

Its function is as follows. Transcriptional regulator. The polypeptide is Putative nickel-responsive regulator (Methanococcus maripaludis (strain DSM 14266 / JCM 13030 / NBRC 101832 / S2 / LL)).